The sequence spans 78 residues: MSAYCQVTGRKPSFGKSVSHSHRRTNRRWNPNIQRRSFYLPSEGRTITLNVSTKGLKTIDRYGIESVVAKLRARGEKI.

The interval 1–27 (MSAYCQVTGRKPSFGKSVSHSHRRTNR) is disordered.

Belongs to the bacterial ribosomal protein bL28 family.

This chain is Large ribosomal subunit protein bL28, found in Corynebacterium kroppenstedtii (strain DSM 44385 / JCM 11950 / CIP 105744 / CCUG 35717).